The sequence spans 81 residues: Defensin-like protein 45 (81 aa).

An N-terminal signal peptide occupies residues 1–27 (MAITKTSATFVLLIILAASLSNFNVLA). 4 cysteine pairs are disulfide-bonded: C40-C79, C44-C67, C53-C77, and C57-C78.

It belongs to the DEFL family.

Its subcellular location is the secreted. This Arabidopsis thaliana (Mouse-ear cress) protein is Defensin-like protein 45.